A 372-amino-acid polypeptide reads, in one-letter code: Aminomethyltransferase (372 aa).

This sequence belongs to the GcvT family. In terms of assembly, the glycine cleavage system is composed of four proteins: P, T, L and H.

It carries out the reaction N(6)-[(R)-S(8)-aminomethyldihydrolipoyl]-L-lysyl-[protein] + (6S)-5,6,7,8-tetrahydrofolate = N(6)-[(R)-dihydrolipoyl]-L-lysyl-[protein] + (6R)-5,10-methylene-5,6,7,8-tetrahydrofolate + NH4(+). Its function is as follows. The glycine cleavage system catalyzes the degradation of glycine. The protein is Aminomethyltransferase of Burkholderia mallei (strain NCTC 10247).